We begin with the raw amino-acid sequence, 616 residues long: MYKKLAIATLLYSADYLPGVFALGHQVNKLLEEAGKKGDIETCLIVTTSLFNGTLSELAKNILQSIYTKIVLVEPLNCQEESIQKNSENLALLERPELSFALIKARLWELTQFEQVLYLDSDTLPLNKEFLKLFDIMSKQTTSQVGAIADIGWPDMFNSGVMMLIPDADTASVLQNYIFENTSIDGSDQGILNQFFNQNCCTDELVKDSFSREWVQLSFTYNVTIPNLGYQSSPAMNYFKPSIKLIHFIGKHKPWSLWSQKNFIKNEYHDQWNEVYEEFKEEHQLNNEVSKPKISDSDKTETPETITPVDAPPSNEPTTNQEIDTISTVEENVDNQNAEPVPNSDHSPAPNPVPLDFTKWLTTFINKDHLTNQPVNESREYSKENDNNIINSSSNRDQESPPNSTQELNSSYSVVSTQADSDEHQNAEEEDSTTDNASNSGEESHLDDISTAASSNNNVSNQPDGKNFSNSKENNISVESSPSNPEQKRSTDNIQKPSVSTNDLPDDVEPHTSVDDNIQYLEKDKEGYEEFLPDVYESNAIDNEEEFFDDDARDATEGETKTSAVADKQEDMKLTAEETNQPQQEMPNFKFDWEDSDYLSKVERCFPDDIFEYAVE.

Leucine 10, tyrosine 16, and arginine 95 together coordinate UDP. Positions 10, 16, 95, 104, 120, 122, 158, 159, 185, 188, and 189 each coordinate UDP-alpha-D-glucose. UDP contacts are provided by aspartate 120 and aspartate 122. Aspartate 120 and aspartate 122 together coordinate Mn(2+). Residue tyrosine 230 is glycosylated (O-linked (Glc...) tyrosine). Positions 247, 250, and 253 each coordinate UDP. Mn(2+) is bound at residue histidine 247. Glycine 250 and lysine 253 together coordinate UDP-alpha-D-glucose. Over residues 283-302 the composition is skewed to basic and acidic residues; that stretch reads HQLNNEVSKPKISDSDKTET. Disordered stretches follow at residues 283-320, 335-354, 371-525, and 553-588; these read HQLN…PTTN, NQNA…NPVP, TNQP…EKDK, and RDAT…EMPN. The segment covering 377–386 has biased composition (basic and acidic residues); sequence ESREYSKEND. Residues 400–419 show a composition bias toward polar residues; sequence SPPNSTQELNSSYSVVSTQA. The segment covering 450-461 has biased composition (low complexity); the sequence is STAASSNNNVSN. Polar residues-rich tracts occupy residues 462-485 and 492-503; these read QPDG…PSNP and DNIQKPSVSTND. Residues 567–576 show a composition bias toward basic and acidic residues; sequence DKQEDMKLTA. Over residues 577–586 the composition is skewed to polar residues; sequence EETNQPQQEM. O-linked (Glc...) tyrosine glycosylation is present at tyrosine 598.

This sequence belongs to the glycosyltransferase 8 family. Glycogenin subfamily. It depends on Mn(2+) as a cofactor.

The protein localises to the cytoplasm. Its subcellular location is the vacuole. It catalyses the reaction L-tyrosyl-[glycogenin] + UDP-alpha-D-glucose = alpha-D-glucosyl-L-tyrosyl-[glycogenin] + UDP + H(+). It carries out the reaction [1,4-alpha-D-glucosyl](n)-L-tyrosyl-[glycogenin] + UDP-alpha-D-glucose = [1,4-alpha-D-glucosyl](n+1)-L-tyrosyl-[glycogenin] + UDP + H(+). In terms of biological role, self-glucosylating initiator of glycogen synthesis. It catalyzes the formation of a short alpha (1,4)-glucosyl chain covalently attached via a glucose 1-O-tyrosyl linkage to internal tyrosine residues and these chains act as primers for the elongation reaction catalyzed by glycogen synthase. Capable of transferring glucosyl residues to unbound acceptors such as free oligoglucans or oligoglucan derivatives. This is Glycogenin-1 from Saccharomyces cerevisiae (strain ATCC 204508 / S288c) (Baker's yeast).